The chain runs to 278 residues: Small ribosomal subunit protein uS3 (278 aa).

The region spanning 39 to 107 (LRKAISKKYV…KVQLNIVEIS (69 aa)) is the KH type-2 domain. Residues 255–278 (AEIPAEEKPKRVVKKAENITKEEE) form a disordered region.

The protein belongs to the universal ribosomal protein uS3 family. As to quaternary structure, part of the 30S ribosomal subunit. Forms a tight complex with proteins S10 and S14.

Functionally, binds the lower part of the 30S subunit head. Binds mRNA in the 70S ribosome, positioning it for translation. The chain is Small ribosomal subunit protein uS3 from Dehalococcoides mccartyi (strain CBDB1).